The following is a 294-amino-acid chain: N-acetylmuramic acid 6-phosphate etherase (294 aa).

An SIS domain is found at 54–217 (VISSFQNGGR…STASMIGIGK (164 aa)). The active-site Proton donor is the Glu82. Residue Glu113 is part of the active site.

This sequence belongs to the GCKR-like family. MurNAc-6-P etherase subfamily. Homodimer.

It carries out the reaction N-acetyl-D-muramate 6-phosphate + H2O = N-acetyl-D-glucosamine 6-phosphate + (R)-lactate. It functions in the pathway amino-sugar metabolism; N-acetylmuramate degradation. Its function is as follows. Specifically catalyzes the cleavage of the D-lactyl ether substituent of MurNAc 6-phosphate, producing GlcNAc 6-phosphate and D-lactate. This Bacillus cytotoxicus (strain DSM 22905 / CIP 110041 / 391-98 / NVH 391-98) protein is N-acetylmuramic acid 6-phosphate etherase.